The primary structure comprises 179 residues: Nucleoside diphosphate kinase 6 (179 aa).

Residues Lys-18, Phe-67, Arg-95, Thr-101, Arg-115, and Asn-125 each contribute to the ATP site. His-128 serves as the catalytic Pros-phosphohistidine intermediate.

Belongs to the NDK family. It depends on Mg(2+) as a cofactor.

It catalyses the reaction a 2'-deoxyribonucleoside 5'-diphosphate + ATP = a 2'-deoxyribonucleoside 5'-triphosphate + ADP. The enzyme catalyses a ribonucleoside 5'-diphosphate + ATP = a ribonucleoside 5'-triphosphate + ADP. Major role in the synthesis of nucleoside triphosphates other than ATP. The ATP gamma phosphate is transferred to the NDP beta phosphate via a ping-pong mechanism, using a phosphorylated active-site intermediate. In Xenopus tropicalis (Western clawed frog), this protein is Nucleoside diphosphate kinase 6 (nme6).